A 136-amino-acid chain; its full sequence is Lipoprotein YghG (136 aa).

A signal peptide spans 1 to 24; it reads MSIKQMPGRVLISLLLSVTGLLSG. The N-palmitoyl cysteine moiety is linked to residue Cys25. Cys25 is lipidated: S-diacylglycerol cysteine.

Belongs to the GspS/AspS pilotin family.

The protein resides in the cell outer membrane. In terms of biological role, involved in a type II secretion system (T2SS, formerly general secretion pathway, GSP) for the export of folded proteins across the outer membrane. In a functional T2SS this subunit helps assemble the outer membrane channel. In Escherichia coli (strain K12), this protein is Lipoprotein YghG (yghG).